Here is a 683-residue protein sequence, read N- to C-terminus: Actin-binding LIM protein 3 (683 aa).

Met1 carries the N-acetylmethionine modification. 4 LIM zinc-binding domains span residues 21–80 (IQCY…LYGT), 80–140 (TRCD…MASS), 149–208 (SHCA…QFGI), and 208–268 (IKCE…ARAE). Phosphoserine is present on residues Ser277, Ser280, Ser282, Ser286, Ser290, Ser337, Ser372, and Ser373. The tract at residues 372 to 472 (SSPGYIDSPT…EDISQTSKYS (101 aa)) is disordered. At Tyr376 the chain carries Phosphotyrosine. 2 positions are modified to phosphoserine: Ser379 and Ser388. Polar residues-rich tracts occupy residues 380–393 (PTYS…TFSR), 406–426 (GRSS…TSYQ), and 454–471 (STAT…TSKY). A phosphoserine mark is found at Ser493, Ser503, and Ser504. Thr543 bears the Phosphothreonine mark. Ser567, Ser576, and Ser607 each carry phosphoserine. An HP domain is found at 615–683 (MREYKIYPYE…NELKKQARLF (69 aa)). Omega-N-methylarginine is present on Arg631.

Directly interacts with F-actin and ABRA. As to expression, expressed predominantly in heart and brain.

The protein resides in the cytoplasm. In terms of biological role, may act as scaffold protein. May stimulate ABRA activity and ABRA-dependent SRF transcriptional activity. This Homo sapiens (Human) protein is Actin-binding LIM protein 3 (ABLIM3).